A 103-amino-acid chain; its full sequence is Large ribosomal subunit protein bL21 (103 aa).

This sequence belongs to the bacterial ribosomal protein bL21 family. In terms of assembly, part of the 50S ribosomal subunit. Contacts protein L20.

This protein binds to 23S rRNA in the presence of protein L20. This Alcanivorax borkumensis (strain ATCC 700651 / DSM 11573 / NCIMB 13689 / SK2) protein is Large ribosomal subunit protein bL21.